We begin with the raw amino-acid sequence, 919 residues long: MSKDSTSLGVRTIVIACLVLLGCCIVEAVPTTPSSQPSTPASTQSAKTVDQTLLPTETPDPLRLAVRESGILAEDGDFYTCPPPTGSTVVRIEPPRSCPKFDLGRNFTEGIAVIFKENIAPYKFRANVYYKDIVVTKVWKGYSHTSLSDRYNDRVPVSVEEIFTLIDSKGKCSSKAEYLRDNIMHHAYHDDEDEVELDLVPSKFATPGARAWQTTNDTTSYVGWMPWRHYTSTSVNCIVEEVEARSVYPYDSFALSTGDIVYTSPFYGLRSAAQLEHNSYAQERFRQVEGYQPRDLDSKLQAGEPVTKNFITTPHVTVSWNWTEKKIEACTLTKWKEVDELVRDEFRGSYRFTIRSISSTFISNTTQFKLEDAPLTDCVSKEAKDAIDSIYRKQYESTHVFSGDVEFYLARGGFLIAFRPMISNELARLYLNELVRSNRTYDLKNLLNPNANHNTNRTRRSLLSIPEPTPTQESLHREQILHRLHKRAVEAANSTNSSNVTAKQLELIKTTSSIEFAMLQFAYDHIQSHVNEMLSRIATAWCTLQNKERTLWNEMVKVNPSAIVSATLDERVAARVLGDVIAITHCVKIEGNVYLQNSMRSSDSNTCYSRPPVTFTITKNANSRGTIEGQLGEENEVYTERKLIEPCAINQKRYFKFGKEYVYYENYTYVRKVPPTEIEVISTYVELNLTLLEDREFLPLEVYTRAELEDTGLLDYSEIQRRNQLHALRFYDIDSVVNVDNTAVIMQGIATFFKGLGKVGEAVGTLVLGAAGAVVSTVSGIASFINNPFGGLAIGLLVIAGLVAAFFAYRYVMQLRSNPMKALYPITTRSLKNKAKASYGQNDDDDTSDFDEAKLEEAREMIKYMSMVSALEKQEKKAMKKNKGVGLIASNVSKLALRRRGPKYTRLREDDPMESEKMV.

The signal sequence occupies residues Met1–Ala28. The Virion surface portion of the chain corresponds to Val29–Pro788. 5 disulfide bridges follow: Cys81/Cys586, Cys98/Cys542, Cys172/Cys237, Cys330/Cys378, and Cys607/Cys647. N-linked (GlcNAc...) asparagine; by host glycosylation is present at Asn106. Positions Val138 to His144 are involved in fusion and/or binding to host membrane. N-linked (GlcNAc...) asparagine; by host glycosylation occurs at Asn216. An involved in fusion and/or binding to host membrane region spans residues Gly223–Thr231. N-linked (GlcNAc...) asparagine; by host glycosylation is found at Asn321, Asn364, Asn438, Asn456, Asn493, Asn496, and Asn499. Residues Asn666 and Asn688 are each glycosylated (N-linked (GlcNAc...) asparagine; by host). 2 hydrophobic membrane proximal region regions span residues Ile733 to Asn786 and Thr765 to Ile785. A helical transmembrane segment spans residues Phe789–Tyr809. Topologically, residues Arg810 to Val919 are intravirion. Residues Tyr864–Met867 carry the Golgi targeting motif. Residues Arg900 to Val919 form a disordered region. The short motif at Tyr904–Leu907 is the Internalization motif element. Positions Arg906 to Val919 are enriched in basic and acidic residues.

Belongs to the herpesviridae glycoprotein B family. Homotrimer; disulfide-linked. Binds to heparan sulfate proteoglycans. Interacts with gH/gL heterodimer. In terms of processing, a proteolytic cleavage by host furin generates two subunits that remain linked by disulfide bonds.

The protein resides in the virion membrane. Its subcellular location is the host cell membrane. It localises to the host endosome membrane. The protein localises to the host Golgi apparatus membrane. In terms of biological role, envelope glycoprotein that forms spikes at the surface of virion envelope. Essential for the initial attachment to heparan sulfate moieties of the host cell surface proteoglycans. Involved in fusion of viral and cellular membranes leading to virus entry into the host cell. Following initial binding to its host receptors, membrane fusion is mediated by the fusion machinery composed at least of gB and the heterodimer gH/gL. May be involved in the fusion between the virion envelope and the outer nuclear membrane during virion egress. The sequence is that of Envelope glycoprotein B from Equus caballus (Horse).